The primary structure comprises 239 residues: Probable intron-encoded endonuclease I-ZbiI (239 aa).

Belongs to the LAGLIDADG endonuclease family.

It localises to the mitochondrion. In terms of biological role, endonuclease involved in mitochondrial 21S rRNA gene intron homing. This chain is Probable intron-encoded endonuclease I-ZbiI, found in Zygosaccharomyces bisporus.